The sequence spans 136 residues: Lymphocyte antigen 6E (136 aa).

Positions 1–26 (MSATSNMRVFLPVLLAALLGMEQVHS) are cleaved as a signal peptide. Residues 27–118 (LMCFSCTDQK…AGLGLRASIP (92 aa)) enclose the UPAR/Ly6 domain. Intrachain disulfides connect cysteine 29/cysteine 54, cysteine 32/cysteine 41, cysteine 47/cysteine 76, cysteine 80/cysteine 98, and cysteine 99/cysteine 104. Asparagine 105 is a glycosylation site (N-linked (GlcNAc...) asparagine). The GPI-anchor amidated alanine moiety is linked to residue alanine 108. Residues 109–136 (AGLGLRASIPLLGLGLLLSLLALLQLSP) constitute a propeptide, removed in mature form.

As to quaternary structure, interacts with CHRNA4. Interacts with CD3Z/CD247. As to expression, ubiquitously expressed in mouse adult tissues with maximal expression in the lung and the salivary gland. Expression is strikingly lower in the fetal tissues except for the placenta. Present in thymus where its expression is observed in immature thymocytes and thymic stromal cells. Also found on functionally active T-cells as well as B-cells and thymic dendritic cells.

It localises to the cell membrane. Its function is as follows. GPI-anchored cell surface protein that regulates T-lymphocytes proliferation, differentiation, and activation. Regulates the T-cell receptor (TCR) signaling by interacting with component CD3Z/CD247 at the plasma membrane, leading to CD3Z/CD247 phosphorylation modulation. Restricts the entry of murine coronavirus, mouse hepatitis virus, by interfering with spike protein-mediated membrane fusion. Also plays an essential role in placenta formation by acting as the main receptor for syncytin-A (SynA). Therefore, participates in the normal fusion of syncytiotrophoblast layer I (SynT-I) and in the proper morphogenesis of both fetal and maternal vasculatures within the placenta. May also act as a modulator of nicotinic acetylcholine receptors (nAChRs) activity. In vitro inhibits alpha-3:beta-4-containing nAChRs maximum response. This chain is Lymphocyte antigen 6E, found in Mus musculus (Mouse).